We begin with the raw amino-acid sequence, 398 residues long: Lipase member N (398 aa).

An N-terminal signal peptide occupies residues 1-18 (MMWLLLTTTCLICGTLNA). The 301-residue stretch at 79–379 (PVVYMQHALF…DWNHFDFVWG (301 aa)) folds into the AB hydrolase-1 domain. Ser-173 (nucleophile) is an active-site residue. Residues Cys-247 and Cys-256 are joined by a disulfide bond. N-linked (GlcNAc...) asparagine glycosylation occurs at Asn-272. Catalysis depends on charge relay system residues Asp-344 and His-373.

It belongs to the AB hydrolase superfamily. Lipase family. As to expression, highly expressed in the epidermis in the granular keratinocytes. Also detected in other tissues, although at much lower levels, including lung and spleen.

The protein localises to the secreted. It carries out the reaction a sterol ester + H2O = a sterol + a fatty acid + H(+). The enzyme catalyses a triacylglycerol + H2O = a 1,2-diacylglycerol + a fatty acid + H(+). It catalyses the reaction a triacylglycerol + H2O = a diacylglycerol + a fatty acid + H(+). The catalysed reaction is a cholesterol ester + H2O = cholesterol + a fatty acid + H(+). Plays a highly specific role in the last step of keratinocyte differentiation. Contains two distinct domains: the alpha/beta hydrolase fold and the abhydrolase-associated lipase region, also features the consensus sequence of the active site of a genuine lipase. May have an essential function in lipid metabolism of the most differentiated epidermal layers. This is Lipase member N (LIPN) from Homo sapiens (Human).